Here is a 221-residue protein sequence, read N- to C-terminus: Adenylate kinase (221 aa).

10–15 (GAGKGT) provides a ligand contact to ATP. Positions 30–59 (STGDIFRQNLRDNTELGKLAKEYMDKGLLV) are NMP. Residues threonine 31, arginine 36, 57-59 (LLV), 85-88 (GYPR), and glutamine 92 each bind AMP. The interval 126 to 163 (GRRVCPVCGATYHIKTSPPKVDNVCDKCGSELIQRSDD) is LID. Arginine 127 is an ATP binding site. The Zn(2+) site is built by cysteine 130 and cysteine 133. ATP is bound at residue 136–137 (TY). Residues cysteine 150 and cysteine 153 each coordinate Zn(2+). AMP-binding residues include arginine 160 and arginine 171. ATP is bound at residue lysine 199.

The protein belongs to the adenylate kinase family. As to quaternary structure, monomer.

The protein resides in the cytoplasm. It catalyses the reaction AMP + ATP = 2 ADP. Its pathway is purine metabolism; AMP biosynthesis via salvage pathway; AMP from ADP: step 1/1. Functionally, catalyzes the reversible transfer of the terminal phosphate group between ATP and AMP. Plays an important role in cellular energy homeostasis and in adenine nucleotide metabolism. The chain is Adenylate kinase from Caldanaerobacter subterraneus subsp. tengcongensis (strain DSM 15242 / JCM 11007 / NBRC 100824 / MB4) (Thermoanaerobacter tengcongensis).